A 386-amino-acid polypeptide reads, in one-letter code: Oxytocin receptor (386 aa).

Residues 1–31 (MEGVLAANWSAEAVNSSAAPPEAEGNRTAGP) are disordered. Residues 1 to 38 (MEGVLAANWSAEAVNSSAAPPEAEGNRTAGPPQRNEAL) are Extracellular-facing. N-linked (GlcNAc...) asparagine glycosylation is found at N8, N15, and N26. A helical membrane pass occupies residues 39-63 (ARVEVAVLCLILFLALSGNACVLLA). Over 64-74 (LRTTRHKHSRL) the chain is Cytoplasmic. Residues 75 to 97 (FFFMKHLSIADLVVAVFQVLPQL) traverse the membrane as a helical segment. The Extracellular portion of the chain corresponds to 98–113 (LWDITFRFYGPDLLCR). C112 and C187 are disulfide-bonded. The helical transmembrane segment at 114 to 135 (LVKYLQVVGMFASTYLLLLMSL) threads the bilayer. Residues 136–154 (DRCLAICQPLRALRRPADR) are Cytoplasmic-facing. Residues 155–175 (LAVLATWLGCLVASAPQVHIF) form a helical membrane-spanning segment. The Extracellular portion of the chain corresponds to 176 to 202 (SLREVADGVFDCWAVFIQPWGPKAYIT). A helical membrane pass occupies residues 203–225 (WITLAVYIVPVIVLAACYGLISF). The Cytoplasmic segment spans residues 226-277 (KIWQNLRLKTAAEAAEAIAGTEGAAAGSRGRAALARVSSVKLISKAKIRTVK). The chain crosses the membrane as a helical span at residues 278 to 296 (MTFIIVLAFIVCWTPFFFV). Topologically, residues 297–311 (QMWSVWDADAPKEAS) are extracellular. Residues 312–334 (AFIIAMLLASLNSCCNPWIYMLF) traverse the membrane as a helical segment. The Cytoplasmic segment spans residues 335–386 (TGHLFHELVQRFLCCSSSHLKTSRPGETSVSKKSNSSTFVLSQHSSSQKSCS). Residues 355–375 (KTSRPGETSVSKKSNSSTFVL) show a composition bias toward polar residues. Positions 355 to 386 (KTSRPGETSVSKKSNSSTFVLSQHSSSQKSCS) are disordered. Phosphoserine is present on residues S368 and S370. Over residues 376-386 (SQHSSSQKSCS) the composition is skewed to low complexity.

It belongs to the G-protein coupled receptor 1 family. Vasopressin/oxytocin receptor subfamily.

It localises to the cell membrane. In terms of biological role, receptor for oxytocin. The activity of this receptor is mediated by G proteins which activate a phosphatidylinositol-calcium second messenger system. The sequence is that of Oxytocin receptor (OXTR) from Sus scrofa (Pig).